Reading from the N-terminus, the 431-residue chain is Maintenance of mitochondrial morphology protein 1 (431 aa).

The Lumenal segment spans residues M1–G103. A helical transmembrane segment spans residues L104–F124. The Cytoplasmic segment spans residues T125 to S431. An SMP-LTD domain is found at S192 to P404. The interval N412 to S431 is disordered.

This sequence belongs to the MMM1 family. In terms of assembly, homodimer. Component of the ER-mitochondria encounter structure (ERMES) or MDM complex, composed of MMM1, MDM10, MDM12 and MDM34. An MMM1 homodimer associates with one molecule of MDM12 on each side in a pairwise head-to-tail manner, and the SMP-LTD domains of MMM1 and MDM12 generate a continuous hydrophobic tunnel for phospholipid trafficking.

The protein resides in the endoplasmic reticulum membrane. Component of the ERMES/MDM complex, which serves as a molecular tether to connect the endoplasmic reticulum (ER) and mitochondria. Components of this complex are involved in the control of mitochondrial shape and protein biogenesis, and function in nonvesicular lipid trafficking between the ER and mitochondria. The MDM12-MMM1 subcomplex functions in the major beta-barrel assembly pathway that is responsible for biogenesis of all outer membrane beta-barrel proteins, and acts in a late step after the SAM complex. The MDM10-MDM12-MMM1 subcomplex further acts in the TOM40-specific pathway after the action of the MDM12-MMM1 complex. Essential for establishing and maintaining the structure of mitochondria and maintenance of mtDNA nucleoids. In Candida glabrata (strain ATCC 2001 / BCRC 20586 / JCM 3761 / NBRC 0622 / NRRL Y-65 / CBS 138) (Yeast), this protein is Maintenance of mitochondrial morphology protein 1.